We begin with the raw amino-acid sequence, 123 residues long: Testis-expressed protein 12 (123 aa).

The segment at 1–41 is disordered; it reads MMANHLVKPDSRNCKRARELEPQVSDSPQVSSLGKSESSLS. The span at 7-21 shows a compositional bias: basic and acidic residues; it reads VKPDSRNCKRARELE. Over residues 31–41 the composition is skewed to low complexity; that stretch reads SSLGKSESSLS.

As to quaternary structure, interacts with SYCE2. In terms of tissue distribution, testis (at protein level). Detected in ovary. Expressed in both male and female germ cells.

The protein localises to the chromosome. Component of the transverse central element of synaptonemal complexes (SCS), formed between homologous chromosomes during meiotic prophase. Requires SYCP1 in order to be incorporated into the central element. In Mus musculus (Mouse), this protein is Testis-expressed protein 12 (Tex12).